Reading from the N-terminus, the 276-residue chain is MAIKKYKPTSNGRRGMTVLDFSEITTDQPEKSLLAPLKKKAGRNNQGKITVRHQGGGHKRQYRIIDFKRDKDGIPGRVATIEYDPNRSANIALIHYADGEKRYIIAPKNLKVGMEIMSGPDADIKVGNALPLENIPVGTFVHNIELKPGRGGQLVRAAGTSAQVLGKEGKYVIVRLASGEVRMILGACRATVGEVGNEQHELVKIGKAGRARWLGIRPTVRGSVMNPVDHPHGGGEGKAPIGRKSPMTPWGKPTLGFKTRKKKNKSDKFIIRRRKK.

The segment at 224-276 (VMNPVDHPHGGGEGKAPIGRKSPMTPWGKPTLGFKTRKKKNKSDKFIIRRRKK) is disordered. Over residues 258 to 276 (KTRKKKNKSDKFIIRRRKK) the composition is skewed to basic residues.

Belongs to the universal ribosomal protein uL2 family. As to quaternary structure, part of the 50S ribosomal subunit. Forms a bridge to the 30S subunit in the 70S ribosome.

Functionally, one of the primary rRNA binding proteins. Required for association of the 30S and 50S subunits to form the 70S ribosome, for tRNA binding and peptide bond formation. It has been suggested to have peptidyltransferase activity; this is somewhat controversial. Makes several contacts with the 16S rRNA in the 70S ribosome. This is Large ribosomal subunit protein uL2 from Geobacillus sp. (strain WCH70).